A 302-amino-acid chain; its full sequence is Endochitinase 4 (302 aa).

The N-terminal stretch at 1–18 (EFTALSLLFSLLLLTASA) is a signal peptide. The Chitin-binding type-1 domain maps to 19–60 (EQCGKQAGGARCAAGLCCSNFGWCGNTNDYCGPGKCQSQCPS). 4 disulfides stabilise this stretch: cysteine 21–cysteine 36, cysteine 30–cysteine 42, cysteine 35–cysteine 49, and cysteine 54–cysteine 58. The segment at 59-79 (PSGPSPKPPTPGPGPSGGDIG) is disordered. The span at 61–72 (GPSPKPPTPGPG) shows a compositional bias: pro residues. The Proton donor role is filled by glutamate 144. Cysteine 162 and cysteine 182 are oxidised to a cystine.

Belongs to the glycosyl hydrolase 19 family. Chitinase class I subfamily.

The protein localises to the vacuole. The catalysed reaction is Random endo-hydrolysis of N-acetyl-beta-D-glucosaminide (1-&gt;4)-beta-linkages in chitin and chitodextrins.. Defense against chitin-containing fungal pathogens. The sequence is that of Endochitinase 4 (CHTB4) from Solanum tuberosum (Potato).